A 298-amino-acid polypeptide reads, in one-letter code: Cyclin-C (298 aa).

The Cyclin N-terminal domain occupies 46 to 162; that stretch reads NFITAVATEC…ILDCCLVVHH (117 aa). Residues 278–298 form a disordered region; sequence KLPKPNTPIPPPQQQQSSYHM.

The protein belongs to the cyclin family. Cyclin C subfamily. In terms of assembly, component of the Mediator complex.

It is found in the nucleus. In terms of biological role, component of the Mediator complex, a coactivator involved in regulated gene transcription of nearly all RNA polymerase II-dependent genes. Mediator functions as a bridge to convey information from gene-specific regulatory proteins to the basal RNA polymerase II transcription machinery. Mediator is recruited to promoters by direct interactions with regulatory proteins and serves as a scaffold for the assembly of a functional preinitiation complex with RNA polymerase II and the general transcription factors. Binds to and activates cyclin-dependent kinase cdk-8 that phosphorylates the CTD (C-terminal domain) of the large subunit of RNA polymerase II (RNAp II), which may inhibit the formation of a transcription initiation complex. This is Cyclin-C (cic-1) from Caenorhabditis briggsae.